A 512-amino-acid chain; its full sequence is Serine--tRNA ligase, cytoplasmic (512 aa).

Met1 is subject to N-acetylmethionine. Positions 9 to 61 (RVDKGGDPALIRETQEKRFKDPGLVDQLVKADSEWRRCRFRADNLNKLKNLCS) are interaction with tRNA. Position 241 is a phosphoserine (Ser241). Residues Thr271 and Arg302 each coordinate L-serine. ATP is bound by residues 302–304 (RQE) and 318–321 (VHQF). Residue Lys323 is modified to N6-acetyllysine. Glu325 is a binding site for L-serine. 391–394 (ELVS) is an ATP binding site. L-serine contacts are provided by Asn427 and Thr429. Residues 472-512 (KPAPIDQEPSKKQKKQHEGSKKKAKEVTLESQLQNMEVTEA) form a disordered region. Residues 479 to 499 (EPSKKQKKQHEGSKKKAKEVT) show a composition bias toward basic and acidic residues. Residues 482–494 (KKQKKQHEGSKKK) carry the Nuclear localization signal motif. Residues 500–512 (LESQLQNMEVTEA) show a composition bias toward polar residues.

This sequence belongs to the class-II aminoacyl-tRNA synthetase family. Type-1 seryl-tRNA synthetase subfamily. As to quaternary structure, homodimer. The tRNA molecule may bind across the dimer. Interacts with SIRT2. Interacts with METTL6; interaction is required for the tRNA N(3)-methylcytidine methyltransferase activity of METTL6.

Its subcellular location is the cytoplasm. The protein resides in the nucleus. It catalyses the reaction tRNA(Ser) + L-serine + ATP = L-seryl-tRNA(Ser) + AMP + diphosphate + H(+). The enzyme catalyses tRNA(Sec) + L-serine + ATP = L-seryl-tRNA(Sec) + AMP + diphosphate + H(+). It participates in aminoacyl-tRNA biosynthesis; selenocysteinyl-tRNA(Sec) biosynthesis; L-seryl-tRNA(Sec) from L-serine and tRNA(Sec): step 1/1. Catalyzes the attachment of serine to tRNA(Ser) in a two-step reaction: serine is first activated by ATP to form Ser-AMP and then transferred to the acceptor end of tRNA(Ser). Is probably also able to aminoacylate tRNA(Sec) with serine, to form the misacylated tRNA L-seryl-tRNA(Sec), which will be further converted into selenocysteinyl-tRNA(Sec). In the nucleus, binds to the VEGFA core promoter and prevents MYC binding and transcriptional activation by MYC. Recruits SIRT2 to the VEGFA promoter, promoting deacetylation of histone H4 at 'Lys-16' (H4K16). Thereby, inhibits the production of VEGFA and sprouting angiogenesis mediated by VEGFA. The polypeptide is Serine--tRNA ligase, cytoplasmic (SARS1) (Cricetulus griseus (Chinese hamster)).